A 350-amino-acid polypeptide reads, in one-letter code: Anthranilate phosphoribosyltransferase (350 aa).

5-phospho-alpha-D-ribose 1-diphosphate-binding positions include G94, 97–98, T102, 104–107, 122–130, and S134; these read GD, NIST, and KHGNRAVSS. G94 provides a ligand contact to anthranilate. S106 contributes to the Mg(2+) binding site. N125 contacts anthranilate. Residue R180 participates in anthranilate binding. Positions 239 and 240 each coordinate Mg(2+).

The protein belongs to the anthranilate phosphoribosyltransferase family. Homodimer. Requires Mg(2+) as cofactor.

The enzyme catalyses N-(5-phospho-beta-D-ribosyl)anthranilate + diphosphate = 5-phospho-alpha-D-ribose 1-diphosphate + anthranilate. It participates in amino-acid biosynthesis; L-tryptophan biosynthesis; L-tryptophan from chorismate: step 2/5. In terms of biological role, catalyzes the transfer of the phosphoribosyl group of 5-phosphorylribose-1-pyrophosphate (PRPP) to anthranilate to yield N-(5'-phosphoribosyl)-anthranilate (PRA). The chain is Anthranilate phosphoribosyltransferase from Geobacter sulfurreducens (strain ATCC 51573 / DSM 12127 / PCA).